Reading from the N-terminus, the 640-residue chain is GATA zinc finger domain-containing protein 12 (640 aa).

2 disordered regions span residues 121–209 (SNNI…NIPI) and 355–390 (QQIR…HINN). 2 stretches are compositionally biased toward low complexity: residues 122-209 (NNIP…NIPI) and 355-379 (QQIR…QHQQ). The segment covering 380–390 (PPTNIPQHINN) has biased composition (polar residues). The GATA-type zinc finger occupies 506-531 (CVNCKTSDTPEWRRGPQGAKTLCNAC).

This Dictyostelium discoideum (Social amoeba) protein is GATA zinc finger domain-containing protein 12 (gtaL).